The following is a 199-amino-acid chain: NAD(P)H dehydrogenase (quinone) (199 aa).

Residues 4 to 190 (VLVLYYSSWG…DGARFQGRHV (187 aa)) form the Flavodoxin-like domain. FMN-binding positions include 10-15 (SSWGHV) and 78-80 (TRY). Trp12 contributes to the NAD(+) binding site. Trp98 is a substrate binding site. FMN-binding positions include 113 to 119 (STASQHG) and His134.

It belongs to the WrbA family. FMN serves as cofactor.

The catalysed reaction is a quinone + NADH + H(+) = a quinol + NAD(+). It catalyses the reaction a quinone + NADPH + H(+) = a quinol + NADP(+). The polypeptide is NAD(P)H dehydrogenase (quinone) (Methylorubrum extorquens (strain CM4 / NCIMB 13688) (Methylobacterium extorquens)).